Reading from the N-terminus, the 119-residue chain is Beta-2-microglobulin (119 aa).

An N-terminal signal peptide occupies residues 1–20 (MVCSVVVALLALLSLSGLEA). Positions 25–114 (PKIQVYSRHP…VTFSTPKTVK (90 aa)) constitute an Ig-like C1-type domain. Cysteine 45 and cysteine 100 form a disulfide bridge.

The protein belongs to the beta-2-microglobulin family. Heterodimer of an alpha chain and a beta chain. Beta-2-microglobulin is the beta-chain of major histocompatibility complex class I molecules.

It is found in the secreted. Component of the class I major histocompatibility complex (MHC). Involved in the presentation of peptide antigens to the immune system. This is Beta-2-microglobulin (B2M) from Cebuella pygmaea (Pygmy marmoset).